Here is a 552-residue protein sequence, read N- to C-terminus: DUF724 domain-containing protein 10 (552 aa).

Residues 308–361 form a disordered region; it reads SSLTQGSGDKTEVETQRKTFPKKTLPRNQNGSGNDSTLENENSNRKRKREENLC. Residues 333 to 348 are compositionally biased toward polar residues; the sequence is PRNQNGSGNDSTLENE. Residues 371 to 543 form the DUF724 domain; sequence ILFEKKLPVW…LEFQATASAP (173 aa).

As to expression, expressed at low levels in leaves, stems, flowers and siliques.

May be involved in the polar growth of plant cells via transportation of RNAs. In Arabidopsis thaliana (Mouse-ear cress), this protein is DUF724 domain-containing protein 10.